A 625-amino-acid chain; its full sequence is ATP-dependent RNA helicase mrh4, mitochondrial (625 aa).

The N-terminal 16 residues, 1-16, are a transit peptide targeting the mitochondrion; the sequence is MWKTARDSVCLICRSA. The segment covering 19–28 has biased composition (low complexity); that stretch reads TTTSTSARAS. The tract at residues 19–119 is disordered; the sequence is TTTSTSARAS…DKNTKGQKAL (101 aa). Residues 90–113 are compositionally biased toward basic and acidic residues; sequence DPRKAPKPKPVEEDSRRDKRDKNT. A Q motif motif is present at residues 144–177; sequence QAFDQFDLLPVVKEAIAQEALKGMTEIKPTPVQR. The Helicase ATP-binding domain maps to 195–406; sequence PKSDNGREEF…EEQFPYINRI (212 aa). 208-215 contributes to the ATP binding site; sequence AETGSGKT. The DEAD box motif lies at 353-356; sequence DEAD. Residues 453–625 enclose the Helicase C-terminal domain; the sequence is EGPKSEIDVK…ESMFMGQALV (173 aa).

The protein belongs to the DEAD box helicase family. MRH4 subfamily.

It is found in the mitochondrion. The catalysed reaction is ATP + H2O = ADP + phosphate + H(+). Its function is as follows. ATP-binding RNA helicase involved in mitochondrial RNA metabolism. Required for maintenance of mitochondrial DNA. The chain is ATP-dependent RNA helicase mrh4, mitochondrial (drh-15) from Neurospora crassa (strain ATCC 24698 / 74-OR23-1A / CBS 708.71 / DSM 1257 / FGSC 987).